The following is a 244-amino-acid chain: Probable transcriptional regulatory protein MMOB1910 (244 aa).

It belongs to the TACO1 family.

The protein localises to the cytoplasm. This chain is Probable transcriptional regulatory protein MMOB1910, found in Mycoplasma mobile (strain ATCC 43663 / 163K / NCTC 11711) (Mesomycoplasma mobile).